A 151-amino-acid chain; its full sequence is Ribonuclease H (151 aa).

The RNase H type-1 domain maps to 1 to 143 (MYKKIEIFTD…CDQLARLAAK (143 aa)). Residues D10, E48, D70, and D135 each coordinate Mg(2+).

Belongs to the RNase H family. Monomer. The cofactor is Mg(2+).

The protein localises to the cytoplasm. The catalysed reaction is Endonucleolytic cleavage to 5'-phosphomonoester.. Endonuclease that specifically degrades the RNA of RNA-DNA hybrids. This chain is Ribonuclease H, found in Blochmanniella pennsylvanica (strain BPEN).